The sequence spans 141 residues: Large ribosomal subunit protein uL11 (141 aa).

It belongs to the universal ribosomal protein uL11 family. Part of the ribosomal stalk of the 50S ribosomal subunit. Interacts with L10 and the large rRNA to form the base of the stalk. L10 forms an elongated spine to which L12 dimers bind in a sequential fashion forming a multimeric L10(L12)X complex. In terms of processing, one or more lysine residues are methylated.

In terms of biological role, forms part of the ribosomal stalk which helps the ribosome interact with GTP-bound translation factors. This chain is Large ribosomal subunit protein uL11, found in Clostridium botulinum (strain Alaska E43 / Type E3).